We begin with the raw amino-acid sequence, 693 residues long: Elongation factor G (693 aa).

The tr-type G domain maps to 8-282 (AKTRNIGIMA…AVIDYLPSPL (275 aa)). GTP-binding positions include 17-24 (AHVDAGKT), 81-85 (DTPGH), and 135-138 (NKMD).

It belongs to the TRAFAC class translation factor GTPase superfamily. Classic translation factor GTPase family. EF-G/EF-2 subfamily.

Its subcellular location is the cytoplasm. Functionally, catalyzes the GTP-dependent ribosomal translocation step during translation elongation. During this step, the ribosome changes from the pre-translocational (PRE) to the post-translocational (POST) state as the newly formed A-site-bound peptidyl-tRNA and P-site-bound deacylated tRNA move to the P and E sites, respectively. Catalyzes the coordinated movement of the two tRNA molecules, the mRNA and conformational changes in the ribosome. The polypeptide is Elongation factor G (Streptococcus thermophilus (strain CNRZ 1066)).